The sequence spans 579 residues: MFS-type transporter ppz2 (579 aa).

Residues 1-23 (MQTATALEDSANAPSPAASSQGQ) are disordered. Low complexity predominate over residues 10–20 (SANAPSPAASS). N-linked (GlcNAc...) asparagine glycosylation is present at Asn-38. 14 helical membrane-spanning segments follow: residues 48–68 (ALIM…NTII), 83–103 (AAYT…TMVW), 121–141 (LCFF…MLIA), 145–165 (IQGI…GDLF), 171–191 (GLYY…GPVV), 203–223 (WCFY…ILLL), 236–256 (IAAI…MILL), 269–289 (SATV…CFSW), 298–318 (LLPV…ACFI), 336–356 (AVLG…AVSI), 374–394 (LTPI…FIDL), 403–423 (IIVF…APMV), 438–460 (TSAY…QTVF), and 516–536 (SMWI…PFLG).

Belongs to the major facilitator superfamily. TCR/Tet family.

Its subcellular location is the membrane. MFS-type transporter; part of the gene cluster that mediates the biosynthesis of pyrrolopyrazines, secondary metabolites showing insecticidal activity. Probably involved in the secretion of peramine and other pyrrolopyrazines. The chain is MFS-type transporter ppz2 from Metarhizium majus (strain ARSEF 297).